The chain runs to 62 residues: Cytochrome b-c1 complex subunit 6-2, mitochondrial (62 aa).

Disulfide bonds link cysteine 17-cysteine 59 and cysteine 31-cysteine 45.

This sequence belongs to the UQCRH/QCR6 family. Component of the ubiquinol-cytochrome c oxidoreductase (cytochrome b-c1 complex, complex III, CIII), a multisubunit enzyme composed of 10 subunits. The complex is composed of 3 respiratory subunits cytochrome b (MT-CYB), cytochrome c1 (CYC1-1 or CYC1-2) and Rieske protein (UCR1-1 or UCR1-2), 2 core protein subunits MPPalpha1 (or MPPalpha2) and MPPB, and 5 low-molecular weight protein subunits QCR7-1 (or QCR7-2), UCRQ-1 (or UCRQ-2), QCR9, UCRY and probably QCR6-1 (or QCR6-2). The complex exists as an obligatory dimer and forms supercomplexes (SCs) in the inner mitochondrial membrane with NADH-ubiquinone oxidoreductase (complex I, CI), resulting in different assemblies (supercomplexes SCI(1)III(2) and SCI(2)III(4)).

Its subcellular location is the mitochondrion inner membrane. Component of the ubiquinol-cytochrome c oxidoreductase, a multisubunit transmembrane complex that is part of the mitochondrial electron transport chain which drives oxidative phosphorylation. The respiratory chain contains 3 multisubunit complexes succinate dehydrogenase (complex II, CII), ubiquinol-cytochrome c oxidoreductase (cytochrome b-c1 complex, complex III, CIII) and cytochrome c oxidase (complex IV, CIV), that cooperate to transfer electrons derived from NADH and succinate to molecular oxygen, creating an electrochemical gradient over the inner membrane that drives transmembrane transport and the ATP synthase. The cytochrome b-c1 complex catalyzes electron transfer from ubiquinol to cytochrome c, linking this redox reaction to translocation of protons across the mitochondrial inner membrane, with protons being carried across the membrane as hydrogens on the quinol. In the process called Q cycle, 2 protons are consumed from the matrix, 4 protons are released into the intermembrane space and 2 electrons are passed to cytochrome c. This chain is Cytochrome b-c1 complex subunit 6-2, mitochondrial (QCR6-2), found in Arabidopsis thaliana (Mouse-ear cress).